We begin with the raw amino-acid sequence, 361 residues long: Mitogen-activated protein kinase 1 (361 aa).

The region spanning 28–316 (YINLAYIGEG…VEAALAHPYL (289 aa)) is the Protein kinase domain. ATP is bound by residues 34-42 (IGEGAYGMV) and lysine 57. The active-site Proton acceptor is the aspartate 152. Threonine 188 is modified (phosphothreonine). A TXY motif is present at residues 188–190 (TEY). Tyrosine 190 is modified (phosphotyrosine).

The protein belongs to the protein kinase superfamily. CMGC Ser/Thr protein kinase family. MAP kinase subfamily. As to quaternary structure, interacts with CDK2AP2. Mg(2+) is required as a cofactor. Post-translationally, dually phosphorylated on Thr-188 and Tyr-190, which activates the enzyme. In terms of tissue distribution, expressed in the central nervous system, kidney, liver, intestine and the hematopoietic system. Also found in heart, muscle, pancreas and lung.

The protein localises to the cytoplasm. It is found in the cytoskeleton. Its subcellular location is the microtubule organizing center. It localises to the centrosome. The protein resides in the spindle. It carries out the reaction L-seryl-[protein] + ATP = O-phospho-L-seryl-[protein] + ADP + H(+). It catalyses the reaction L-threonyl-[protein] + ATP = O-phospho-L-threonyl-[protein] + ADP + H(+). Activated by tyrosine phosphorylation during the M phase of the meiotic cell cycle. Dephosphorylated and inactivated by DUSP1. Functionally, serine/threonine kinase which acts as an essential component of the MAP kinase signal transduction pathway. Plays an important role in the MAPK/ERK cascade. Depending on the cellular context, this cascade mediates diverse biological functions such as cell growth, adhesion, survival and differentiation through the regulation of transcription, translation, cytoskeletal rearrangements. The MAPK/ERK cascade also plays a role in initiation and regulation of meiosis, mitosis, and postmitotic functions in differentiated cells by phosphorylating a number of transcription factors. Many of the substrates are localized in the nucleus, and seem to participate in the regulation of transcription upon stimulation. However, other substrates are found in the cytosol as well as in other cellular organelles, and those are responsible for processes such as translation, mitosis and apoptosis. Moreover, the MAPK/ERK cascade is also involved in the regulation of the endosomal dynamics, including lysosome processing and endosome cycling through the perinuclear recycling compartment (PNRC); as well as in the fragmentation of the Golgi apparatus during mitosis. Phosphorylates microtubule-associated protein 2 (MAP2), myelin basic protein (MBP) and Elk-1. Phosphorylates dual specificity protein phosphatase 1 (DUSP1) during meiosis, increasing its stability. Activated by M phase promoting factor (MPF). Plays a role in the spindle assembly checkpoint. This chain is Mitogen-activated protein kinase 1 (mapk1), found in Xenopus laevis (African clawed frog).